A 613-amino-acid polypeptide reads, in one-letter code: Dihydroxy-acid dehydratase (613 aa).

Asp-81 contributes to the Mg(2+) binding site. A [2Fe-2S] cluster-binding site is contributed by Cys-122. Mg(2+)-binding residues include Asp-123 and Lys-124. Position 124 is an N6-carboxylysine (Lys-124). Cys-195 serves as a coordination point for [2Fe-2S] cluster. A Mg(2+)-binding site is contributed by Glu-491. The Proton acceptor role is filled by Ser-517.

Belongs to the IlvD/Edd family. As to quaternary structure, homodimer. The cofactor is [2Fe-2S] cluster. Mg(2+) is required as a cofactor.

The enzyme catalyses (2R)-2,3-dihydroxy-3-methylbutanoate = 3-methyl-2-oxobutanoate + H2O. It carries out the reaction (2R,3R)-2,3-dihydroxy-3-methylpentanoate = (S)-3-methyl-2-oxopentanoate + H2O. Its pathway is amino-acid biosynthesis; L-isoleucine biosynthesis; L-isoleucine from 2-oxobutanoate: step 3/4. It participates in amino-acid biosynthesis; L-valine biosynthesis; L-valine from pyruvate: step 3/4. Its function is as follows. Functions in the biosynthesis of branched-chain amino acids. Catalyzes the dehydration of (2R,3R)-2,3-dihydroxy-3-methylpentanoate (2,3-dihydroxy-3-methylvalerate) into 2-oxo-3-methylpentanoate (2-oxo-3-methylvalerate) and of (2R)-2,3-dihydroxy-3-methylbutanoate (2,3-dihydroxyisovalerate) into 2-oxo-3-methylbutanoate (2-oxoisovalerate), the penultimate precursor to L-isoleucine and L-valine, respectively. This is Dihydroxy-acid dehydratase from Aeromonas hydrophila subsp. hydrophila (strain ATCC 7966 / DSM 30187 / BCRC 13018 / CCUG 14551 / JCM 1027 / KCTC 2358 / NCIMB 9240 / NCTC 8049).